Reading from the N-terminus, the 587-residue chain is MDSGQPWFPKIHTKEVRRRLSSLNIATPSSSPCNMNWQSLEPKHIINDNVYGTVKVPRPIDKLIDTVEFQRLRHLKQTGLVYLVYPNCEHSRFVHSLGTFSLAYALVDKLRHSQPSLNITESDLICTSVAALLHDVGHGPFSHLFDGEFAKRNGSRFKHEDMSILIIKKIMNKPEIKSEFACILGETDEEYAKSVTLITELISGKPFDFQDMDGFKDLPADVREETVKNEWAIIGCGPEKSFLFDVVSNSYNGHDVDKMDYLLRDSKASGVGITFSESTLERLFNHVRVVIDPNSGLKRIAYSIKCIGDLKAIGDSRQELHSKVYQHKAVRFMETLMVDALINAGDFLKYKGSNGELYSLKNVTEDVDAFLKTTDYVEQEILNSQITDPKMIEAQTALLKIQRREIGCKLGYFEMNPENATQLKGNCNNQTGAAEVVKKVGQKMKEILEQMDDTEEMDGKLKDIQFTVMHSVLGRGLDDKTHPIERQIFYDGKPSEHEGKQVVGFYPSEDYVINNCPRMATKWEIFVMGDRSLRKEPLLADRVKRALQLAGESEKFLTPRKRSPQDSPDEVSSSCSTAKRRLEFGSS.

Residues 92-262 (RFVHSLGTFS…GHDVDKMDYL (171 aa)) form the HD domain. 4 residues coordinate Zn(2+): H95, H134, D135, and D257. The segment at 554 to 587 (EKFLTPRKRSPQDSPDEVSSSCSTAKRRLEFGSS) is disordered. T558 is modified (phosphothreonine).

The protein belongs to the SAMHD1 family. Homodimer. Homotetramer; in dGTP-bound form. The cofactor is Zn(2+).

The protein resides in the nucleus. It is found in the chromosome. It catalyses the reaction a 2'-deoxyribonucleoside 5'-triphosphate + H2O = a 2'-deoxyribonucleoside + triphosphate + H(+). Allosterically activated and regulated by GTP or dGTP. Allosteric activation promotes the formation of highly active homotetramers. Phosphorylation impairs homotetramerization, thereby inhibiting dNTPase activity. In terms of biological role, has deoxynucleoside triphosphate (dNTPase) activity. dNTPase activity acts as a regulator of DNA precursor pools by regulating dNTP pools. Phosphorylation acts as a switch to control dNTPase-dependent and -independent functions. The protein is Deoxynucleoside triphosphate triphosphohydrolase sahd-1 of Caenorhabditis elegans.